A 124-amino-acid chain; its full sequence is Large ribosomal subunit protein eL33 (124 aa).

Alanine 2 carries the N-acetylalanine modification.

Belongs to the eukaryotic ribosomal protein eL33 family.

The protein is Large ribosomal subunit protein eL33 of Caenorhabditis elegans.